The sequence spans 1872 residues: E3 ubiquitin-protein ligase UBR2 (1872 aa).

The UBR-type zinc finger occupies 96–172 (TACTRLCFPS…DAFKCKNELN (77 aa)). A Glycyl lysine isopeptide (Lys-Gly) (interchain with G-Cter in ubiquitin) cross-link involves residue lysine 709. The interaction with UBC2 stretch occupies residues 1134–1240 (RYLMETAPHV…SSNTINSCCD (107 aa)). Positions 1203–1227 (NNSVDTSDISTPRTTSPSLSPTRIN) are disordered. A compositionally biased stretch (low complexity) spans 1212–1225 (STPRTTSPSLSPTR). Residues serine 1218 and serine 1222 each carry the phosphoserine modification. The RING-type; atypical zinc-finger motif lies at 1241 to 1362 (DDCVFCKMPK…GLIYCPVCNS (122 aa)).

This sequence belongs to the E3 ubiquitin-protein ligase UBR1-like family. As to quaternary structure, interacts with MUB1, RPN4 and UBC2.

It localises to the cytoplasm. It carries out the reaction S-ubiquitinyl-[E2 ubiquitin-conjugating enzyme]-L-cysteine + [acceptor protein]-L-lysine = [E2 ubiquitin-conjugating enzyme]-L-cysteine + N(6)-ubiquitinyl-[acceptor protein]-L-lysine.. The protein operates within protein modification; protein ubiquitination. Functionally, E3 ubiquitin-protein ligase which probably functions outside the N-end rule pathway, since it lacks the residues essential for the degradation of N-end rule substrates. Mediates RPN4 ubiquitination and subsequent degradation. This chain is E3 ubiquitin-protein ligase UBR2 (UBR2), found in Saccharomyces cerevisiae (strain ATCC 204508 / S288c) (Baker's yeast).